A 206-amino-acid polypeptide reads, in one-letter code: Small ribosomal subunit protein uS4 (206 aa).

The S4 RNA-binding domain maps to 98–176 (RRLDNVVYRL…APKWLEANRE (79 aa)).

It belongs to the universal ribosomal protein uS4 family. In terms of assembly, part of the 30S ribosomal subunit. Contacts protein S5. The interaction surface between S4 and S5 is involved in control of translational fidelity.

Its function is as follows. One of the primary rRNA binding proteins, it binds directly to 16S rRNA where it nucleates assembly of the body of the 30S subunit. Functionally, with S5 and S12 plays an important role in translational accuracy. This is Small ribosomal subunit protein uS4 from Gloeobacter violaceus (strain ATCC 29082 / PCC 7421).